Consider the following 96-residue polypeptide: UPF0729 protein AGAP000931 (96 aa).

The interval 65–96 (VPPGHDPVGPTVAADTATSDAVDDAASSKKTL) is disordered. Residues 75 to 96 (TVAADTATSDAVDDAASSKKTL) show a composition bias toward low complexity.

This sequence belongs to the UPF0729 family.

The chain is UPF0729 protein AGAP000931 from Anopheles gambiae (African malaria mosquito).